The primary structure comprises 159 residues: 2-C-methyl-D-erythritol 2,4-cyclodiphosphate synthase (159 aa).

Positions 10 and 12 each coordinate a divalent metal cation. Residues 10 to 12 and 36 to 37 contribute to the 4-CDP-2-C-methyl-D-erythritol 2-phosphate site; these read DVH and HS. His44 contributes to the a divalent metal cation binding site. 4-CDP-2-C-methyl-D-erythritol 2-phosphate contacts are provided by residues 58–60, 63–67, and Arg144; these read DIG and FSDTD.

The protein belongs to the IspF family. Homotrimer. A divalent metal cation serves as cofactor.

The catalysed reaction is 4-CDP-2-C-methyl-D-erythritol 2-phosphate = 2-C-methyl-D-erythritol 2,4-cyclic diphosphate + CMP. It participates in isoprenoid biosynthesis; isopentenyl diphosphate biosynthesis via DXP pathway; isopentenyl diphosphate from 1-deoxy-D-xylulose 5-phosphate: step 4/6. Involved in the biosynthesis of isopentenyl diphosphate (IPP) and dimethylallyl diphosphate (DMAPP), two major building blocks of isoprenoid compounds. Catalyzes the conversion of 4-diphosphocytidyl-2-C-methyl-D-erythritol 2-phosphate (CDP-ME2P) to 2-C-methyl-D-erythritol 2,4-cyclodiphosphate (ME-CPP) with a corresponding release of cytidine 5-monophosphate (CMP). The protein is 2-C-methyl-D-erythritol 2,4-cyclodiphosphate synthase of Paraburkholderia xenovorans (strain LB400).